A 133-amino-acid chain; its full sequence is Small ribosomal subunit protein uS8 (133 aa).

It belongs to the universal ribosomal protein uS8 family. As to quaternary structure, part of the 30S ribosomal subunit. Contacts proteins S5 and S12.

In terms of biological role, one of the primary rRNA binding proteins, it binds directly to 16S rRNA central domain where it helps coordinate assembly of the platform of the 30S subunit. The chain is Small ribosomal subunit protein uS8 from Microcystis aeruginosa (strain NIES-843 / IAM M-2473).